Here is a 241-residue protein sequence, read N- to C-terminus: Probable transcriptional regulatory protein FMG_0893 (241 aa).

The protein belongs to the TACO1 family.

It is found in the cytoplasm. In Finegoldia magna (strain ATCC 29328 / DSM 20472 / WAL 2508) (Peptostreptococcus magnus), this protein is Probable transcriptional regulatory protein FMG_0893.